The chain runs to 38 residues: Phospholipase A2 2 (38 aa).

Ca(2+)-binding residues include Tyr28, Gly30, and Gly32.

Belongs to the phospholipase A2 family. Group I subfamily. Ca(2+) serves as cofactor. As to expression, expressed by the venom gland.

Its subcellular location is the secreted. It carries out the reaction a 1,2-diacyl-sn-glycero-3-phosphocholine + H2O = a 1-acyl-sn-glycero-3-phosphocholine + a fatty acid + H(+). In terms of biological role, snake venom phospholipase A2 (PLA2) that inhibits neuromuscular transmission by blocking acetylcholine release from the nerve termini. PLA2 catalyzes the calcium-dependent hydrolysis of the 2-acyl groups in 3-sn-phosphoglycerides. The chain is Phospholipase A2 2 from Calliophis bivirgatus (Blue Malaysian coral snake).